The sequence spans 129 residues: Small ribosomal subunit protein uS11 (129 aa).

Belongs to the universal ribosomal protein uS11 family. As to quaternary structure, part of the 30S ribosomal subunit. Interacts with proteins S7 and S18. Binds to IF-3.

In terms of biological role, located on the platform of the 30S subunit, it bridges several disparate RNA helices of the 16S rRNA. Forms part of the Shine-Dalgarno cleft in the 70S ribosome. This is Small ribosomal subunit protein uS11 from Listeria innocua serovar 6a (strain ATCC BAA-680 / CLIP 11262).